We begin with the raw amino-acid sequence, 271 residues long: Putative carboxymethylenebutenolidase (271 aa).

Residues cysteine 147, aspartate 204, and histidine 236 contribute to the active site.

The protein belongs to the dienelactone hydrolase family.

The catalysed reaction is 2-(5-oxo-2,5-dihydrofuran-2-ylidene)acetate + H2O = 4-oxohex-2-enedioate + H(+). This Escherichia coli (strain K12) protein is Putative carboxymethylenebutenolidase (ysgA).